The following is a 344-amino-acid chain: MKRLIKDFTFDELKKWVEETGEKPFRANQIFEWLYKKNATDVNSFTNIPTQLRKRIEEEFILNSLRVVKYESDGESIKFLLELVDGNAIESVFLPYKYGNAICISTQVGCRMKCAFCASTIGGMIRNLSAGEMVDQIVNIENITKKKISNVVLMGSGEPFDNIENVFKFIDIINSKEGKNIGARHITISTVGIVDGIYKLSEYPKQVNLAISLHAPNNNLRNKLVPMNRKYSIEDILKAVDYYISKTNRRVTFEYALIDGVNDSIECANELAKILSGKLVHVNLIPVNPVNGRNFKKPPKERVKEFYNVLILSGIQVTIRRELGSSIAAACGQLRSRHYNISEK.

Glutamate 90 acts as the Proton acceptor in catalysis. The Radical SAM core domain maps to 96–326; it reads YKYGNAICIS…VTIRRELGSS (231 aa). The cysteines at positions 103 and 331 are disulfide-linked. Residues cysteine 110, cysteine 114, and cysteine 117 each contribute to the [4Fe-4S] cluster site. Residues 157–158, serine 189, 212–214, and asparagine 288 contribute to the S-adenosyl-L-methionine site; these read GE and SLH. The S-methylcysteine intermediate role is filled by cysteine 331.

The protein belongs to the radical SAM superfamily. RlmN family. Requires [4Fe-4S] cluster as cofactor.

The protein localises to the cytoplasm. It carries out the reaction adenosine(2503) in 23S rRNA + 2 reduced [2Fe-2S]-[ferredoxin] + 2 S-adenosyl-L-methionine = 2-methyladenosine(2503) in 23S rRNA + 5'-deoxyadenosine + L-methionine + 2 oxidized [2Fe-2S]-[ferredoxin] + S-adenosyl-L-homocysteine. The enzyme catalyses adenosine(37) in tRNA + 2 reduced [2Fe-2S]-[ferredoxin] + 2 S-adenosyl-L-methionine = 2-methyladenosine(37) in tRNA + 5'-deoxyadenosine + L-methionine + 2 oxidized [2Fe-2S]-[ferredoxin] + S-adenosyl-L-homocysteine. Specifically methylates position 2 of adenine 2503 in 23S rRNA and position 2 of adenine 37 in tRNAs. In Caldicellulosiruptor saccharolyticus (strain ATCC 43494 / DSM 8903 / Tp8T 6331), this protein is Probable dual-specificity RNA methyltransferase RlmN.